We begin with the raw amino-acid sequence, 362 residues long: MILSRLLIRHFRNIEQADLPLADGFNFLVGPNGSGKTSILEAIYTLGHGRAFRSAQANRVIQHDENAFILHGRLSGLDEESRGYSIGLSKDREGNSTVRIDGSDGHKIAELAKLLPMQLITPEGFTLLNGGPKYRRAFIDWGCFHNEPRFFAAWSDLKRVLKQRNAALRQASSYRQLLPWDKELILLTEQISQWRAEYTEDIAKDIEETCQLFLPEFTLKVSFQRGWDKETDYAQLLERQFERDKVLSYTSLGAHKADLRIRANGTPVEDMLSRGQLKLLMCALRLAQGEYFTRKNGQRCLYLLDDFASELDANRRQLLAERLKSTQAQVFVSAITSGQVKDMLDVNSRLFSVEHGKIEVKP.

G30 to T37 serves as a coordination point for ATP.

This sequence belongs to the RecF family.

It is found in the cytoplasm. Its function is as follows. The RecF protein is involved in DNA metabolism; it is required for DNA replication and normal SOS inducibility. RecF binds preferentially to single-stranded, linear DNA. It also seems to bind ATP. This Proteus mirabilis (strain HI4320) protein is DNA replication and repair protein RecF.